A 163-amino-acid chain; its full sequence is Small heat shock protein C4 (163 aa).

Residues 53-163 enclose the sHSP domain; the sequence is YNNKILSPRT…QSKAKKIKIS (111 aa).

It belongs to the small heat shock protein (HSP20) family.

The sequence is that of Small heat shock protein C4 (hspc4-1) from Rickettsia felis (strain ATCC VR-1525 / URRWXCal2) (Rickettsia azadi).